A 174-amino-acid polypeptide reads, in one-letter code: RNA pyrophosphohydrolase (174 aa).

In terms of domain architecture, Nudix hydrolase spans 6–149 (GFRANVGIII…KRDVYRKVMK (144 aa)). The Nudix box signature appears at 38–59 (GGVDDGETAEEAMYRELYEEVG).

It belongs to the Nudix hydrolase family. RppH subfamily. A divalent metal cation is required as a cofactor.

Its function is as follows. Accelerates the degradation of transcripts by removing pyrophosphate from the 5'-end of triphosphorylated RNA, leading to a more labile monophosphorylated state that can stimulate subsequent ribonuclease cleavage. In Shewanella baltica (strain OS223), this protein is RNA pyrophosphohydrolase.